The sequence spans 112 residues: Putative pterin-4-alpha-carbinolamine dehydratase (112 aa).

It belongs to the pterin-4-alpha-carbinolamine dehydratase family.

It carries out the reaction (4aS,6R)-4a-hydroxy-L-erythro-5,6,7,8-tetrahydrobiopterin = (6R)-L-erythro-6,7-dihydrobiopterin + H2O. The chain is Putative pterin-4-alpha-carbinolamine dehydratase from Shewanella pealeana (strain ATCC 700345 / ANG-SQ1).